The sequence spans 353 residues: UPF0283 membrane protein YcjF (353 aa).

A compositionally biased stretch (basic and acidic residues) spans 1 to 19; it reads MSEPLKPRIDFAEPLKEEP. The tract at residues 1-35 is disordered; the sequence is MSEPLKPRIDFAEPLKEEPTSAFKAQQTFSEAESR. 3 helical membrane passes run 70–90, 100–120, and 213–233; these read MVMG…VQWT, VALG…GSVV, and ESTL…FIAW.

This sequence belongs to the UPF0283 family.

The protein resides in the cell inner membrane. In Salmonella paratyphi A (strain AKU_12601), this protein is UPF0283 membrane protein YcjF.